The chain runs to 164 residues: uncharacterized protein (164 aa).

A run of 2 helical transmembrane segments spans residues 11–31 (FYVNGFFSFLFLFLFLFPSLL) and 51–71 (CQQYSSLAIFTASGFWLLVLV).

It localises to the membrane. This is an uncharacterized protein from Saccharomyces cerevisiae (strain ATCC 204508 / S288c) (Baker's yeast).